The sequence spans 85 residues: UPF0297 protein Cbei_1105 (85 aa).

The protein belongs to the UPF0297 family.

The protein is UPF0297 protein Cbei_1105 of Clostridium beijerinckii (strain ATCC 51743 / NCIMB 8052) (Clostridium acetobutylicum).